The primary structure comprises 420 residues: ATP phosphoribosyltransferase regulatory subunit (420 aa).

Belongs to the class-II aminoacyl-tRNA synthetase family. HisZ subfamily. As to quaternary structure, heteromultimer composed of HisG and HisZ subunits.

It is found in the cytoplasm. Its pathway is amino-acid biosynthesis; L-histidine biosynthesis; L-histidine from 5-phospho-alpha-D-ribose 1-diphosphate: step 1/9. Its function is as follows. Required for the first step of histidine biosynthesis. May allow the feedback regulation of ATP phosphoribosyltransferase activity by histidine. In Bacillus cereus (strain ZK / E33L), this protein is ATP phosphoribosyltransferase regulatory subunit.